A 266-amino-acid chain; its full sequence is Undecaprenyl-diphosphatase (266 aa).

Helical transmembrane passes span 1–21 (MEFF…FIPI), 39–59 (PGSS…FWYF), 87–107 (IFIG…FVPG), 117–137 (LSIA…DIST), 153–173 (YIGI…GATI), 189–209 (FSFL…FFSA), 216–236 (FPFL…LLAI), and 246–266 (HGLK…LFNL).

This sequence belongs to the UppP family.

It localises to the cell inner membrane. It catalyses the reaction di-trans,octa-cis-undecaprenyl diphosphate + H2O = di-trans,octa-cis-undecaprenyl phosphate + phosphate + H(+). Its function is as follows. Catalyzes the dephosphorylation of undecaprenyl diphosphate (UPP). Confers resistance to bacitracin. In Prochlorococcus marinus subsp. pastoris (strain CCMP1986 / NIES-2087 / MED4), this protein is Undecaprenyl-diphosphatase.